Here is a 443-residue protein sequence, read N- to C-terminus: Glutamate-1-semialdehyde 2,1-aminomutase (443 aa).

Lys-272 bears the N6-(pyridoxal phosphate)lysine mark.

This sequence belongs to the class-III pyridoxal-phosphate-dependent aminotransferase family. HemL subfamily. As to quaternary structure, homodimer. Requires pyridoxal 5'-phosphate as cofactor.

It is found in the cytoplasm. It catalyses the reaction (S)-4-amino-5-oxopentanoate = 5-aminolevulinate. It participates in porphyrin-containing compound metabolism; protoporphyrin-IX biosynthesis; 5-aminolevulinate from L-glutamyl-tRNA(Glu): step 2/2. The protein operates within porphyrin-containing compound metabolism; chlorophyll biosynthesis. In Chloroflexus aurantiacus (strain ATCC 29366 / DSM 635 / J-10-fl), this protein is Glutamate-1-semialdehyde 2,1-aminomutase.